The following is a 280-amino-acid chain: Diaminopimelate epimerase (280 aa).

Substrate-binding residues include Asn-11 and Asn-62. The active-site Proton donor is Cys-71. Substrate is bound by residues 72-73, Asn-160, Asn-193, and 211-212; these read GN and ER. Cys-220 functions as the Proton acceptor in the catalytic mechanism. Residue 221-222 participates in substrate binding; sequence GT.

Belongs to the diaminopimelate epimerase family. As to quaternary structure, homodimer.

Its subcellular location is the cytoplasm. The catalysed reaction is (2S,6S)-2,6-diaminopimelate = meso-2,6-diaminopimelate. The protein operates within amino-acid biosynthesis; L-lysine biosynthesis via DAP pathway; DL-2,6-diaminopimelate from LL-2,6-diaminopimelate: step 1/1. Functionally, catalyzes the stereoinversion of LL-2,6-diaminopimelate (L,L-DAP) to meso-diaminopimelate (meso-DAP), a precursor of L-lysine and an essential component of the bacterial peptidoglycan. In Acetivibrio thermocellus (strain ATCC 27405 / DSM 1237 / JCM 9322 / NBRC 103400 / NCIMB 10682 / NRRL B-4536 / VPI 7372) (Clostridium thermocellum), this protein is Diaminopimelate epimerase.